Here is a 245-residue protein sequence, read N- to C-terminus: Eukaryotic translation initiation factor 6 (245 aa).

Residues Ser174 and Ser175 each carry the phosphoserine; by CK1 modification.

Belongs to the eIF-6 family. As to quaternary structure, monomer. Associates with the 60S ribosomal subunit. In terms of processing, phosphorylation at Ser-174 and Ser-175 promotes nuclear export.

Its subcellular location is the cytoplasm. The protein localises to the nucleus. The protein resides in the nucleolus. Binds to the 60S ribosomal subunit and prevents its association with the 40S ribosomal subunit to form the 80S initiation complex in the cytoplasm. Is also involved in ribosome biogenesis. Associates with pre-60S subunits in the nucleus and is involved in its nuclear export. The polypeptide is Eukaryotic translation initiation factor 6 (Candida albicans (strain SC5314 / ATCC MYA-2876) (Yeast)).